The following is a 275-amino-acid chain: Putative Ig-like V-type domain-containing protein FPV055 (275 aa).

2 consecutive Ig-like V-type domains span residues 25 to 122 and 140 to 239; these read KTFV…MNLG and PRRS…KSLS.

The sequence is that of Putative Ig-like V-type domain-containing protein FPV055 from Fowlpox virus (strain NVSL) (FPV).